We begin with the raw amino-acid sequence, 472 residues long: Fumarate hydratase class II (472 aa).

The interval 1 to 20 (MSPHENPSVETRTESDTFGP) is disordered. Residues 105–107 (SGT), 136–139 (HPND), 146–148 (SSN), and threonine 194 contribute to the substrate site. Positions 127–149 (GKRGGKSPVHPNDHCNRGQSSND) are disordered. Residue histidine 195 is the Proton donor/acceptor of the active site. Residue serine 325 is part of the active site. Residues serine 326 and 331-333 (KVN) each bind substrate.

Belongs to the class-II fumarase/aspartase family. Fumarase subfamily. As to quaternary structure, homotetramer.

The protein localises to the cytoplasm. The catalysed reaction is (S)-malate = fumarate + H2O. It functions in the pathway carbohydrate metabolism; tricarboxylic acid cycle; (S)-malate from fumarate: step 1/1. In terms of biological role, involved in the TCA cycle. Catalyzes the stereospecific interconversion of fumarate to L-malate. The protein is Fumarate hydratase class II of Methylorubrum extorquens (strain ATCC 14718 / DSM 1338 / JCM 2805 / NCIMB 9133 / AM1) (Methylobacterium extorquens).